The primary structure comprises 359 residues: uncharacterized protein (359 aa).

Disordered regions lie at residues 90-117 (QESPVRGMSPAPNGAKVPPRPHSEPSRK), 132-161 (IKKEEIKAKRPPSPPKACSTPGSCSSGMTS), and 235-359 (TSME…THRR). A compositionally biased stretch (polar residues) spans 151-161 (TPGSCSSGMTS). A compositionally biased stretch (low complexity) spans 245–259 (KPPTVKSPPTVKLPP). Positions 286-299 (EENKEVPKEAEHKP) are enriched in basic and acidic residues.

This is an uncharacterized protein from Homo sapiens (Human).